A 185-amino-acid chain; its full sequence is Homeobox expressed in ES cells 1 (185 aa).

Residues 108–167 constitute a DNA-binding region (homeobox); sequence GRRPRTAFTQNQIEVLENVFRVNCYPGIDIREDLAQKLNLEEDRIQIWFQNRRAKLKRSH.

This sequence belongs to the ANF homeobox family. In terms of assembly, can form heterodimers with PROP1 in binding to DNA. Interacts with TLE1.

Its subcellular location is the nucleus. Functionally, required for the normal development of the forebrain, eyes and other anterior structures such as the olfactory placodes and pituitary gland. Possible transcriptional repressor. Binds to the palindromic PIII sequence, 5'-AGCTTGAGTCTAATTGAATTAACTGTAC-3'. HESX1 and PROP1 bind as heterodimers on this palindromic site, and, in vitro, HESX1 can antagonize PROP1 activation. This chain is Homeobox expressed in ES cells 1 (HESX1), found in Pan paniscus (Pygmy chimpanzee).